A 211-amino-acid chain; its full sequence is LexA repressor (211 aa).

Positions 27–47 (QTEIARAFGFKGVRAVQHHLD) form a DNA-binding region, H-T-H motif. Catalysis depends on for autocatalytic cleavage activity residues Ser-131 and Lys-168.

This sequence belongs to the peptidase S24 family. As to quaternary structure, homodimer.

It catalyses the reaction Hydrolysis of Ala-|-Gly bond in repressor LexA.. Represses a number of genes involved in the response to DNA damage (SOS response), including recA and lexA. In the presence of single-stranded DNA, RecA interacts with LexA causing an autocatalytic cleavage which disrupts the DNA-binding part of LexA, leading to derepression of the SOS regulon and eventually DNA repair. This is LexA repressor from Xylella fastidiosa (strain 9a5c).